The sequence spans 1403 residues: Baculoviral IAP repeat-containing protein 1e (1403 aa).

BIR repeat units follow at residues 60 to 127 (EAKR…CEFL), 159 to 227 (EEAR…CEFL), and 278 to 345 (EELR…CVFL). Residues cysteine 315, cysteine 318, histidine 335, and cysteine 342 each coordinate Zn(2+). The NACHT domain maps to 464-759 (SVMCVEGETG…EFLAAVRLTE (296 aa)). 473-478 (GSGKTT) is a binding site for ATP.

As to quaternary structure, component of the NLRC4 inflammasome, at least composed of NLRC4, caspase-1 (CASP1) and some NAIP protein. Flagellin binding by NAIP5 triggers assembly of the inflammasome, a huge complex that contains a single NAIP5 chain and multiple copies of NLRC4. (Microbial infection) Interacts with S.typhimurium (Salmonella) flagellin. In terms of assembly, (Microbial infection) Interacts with L.pneumophila flagellin. In terms of tissue distribution, detected in macrophages (at protein level).

Its function is as follows. Sensor component of the NLRC4 inflammasome that specifically recognizes and binds flagellin from pathogenic bacteria such as Legionella or Salmonella. Association of pathogenic bacteria proteins drives in turn drive assembly and activation of the NLRC4 inflammasome, promoting caspase-1 activation, cytokine production and macrophage pyroptosis. The NLRC4 inflammasome is activated as part of the innate immune response to a range of intracellular bacteria. The NLRC4 inflammasome senses Gram-negative bacteria such as L.pneumophila and P.aeruginosa, enteric pathogens S.typhimurium (Salmonella) and S.flexneri. May contribute to prevent motor-neuron apoptosis induced by a variety of signals. The protein is Baculoviral IAP repeat-containing protein 1e of Mus musculus (Mouse).